The primary structure comprises 510 residues: NAD(P)H-quinone oxidoreductase subunit 2 B, chloroplastic (510 aa).

Helical transmembrane passes span Leu-24–Leu-44, Trp-59–Trp-79, Ile-99–Ile-119, Met-124–Cys-144, Leu-149–Tyr-169, Leu-184–Leu-204, Ile-229–Phe-249, Pro-261–Thr-281, Trp-295–Ile-315, Met-323–Asp-343, Tyr-354–Leu-374, Ala-395–Phe-415, Leu-418–Leu-438, and Met-484–Ile-504.

Belongs to the complex I subunit 2 family. In terms of assembly, NDH is composed of at least 16 different subunits, 5 of which are encoded in the nucleus.

Its subcellular location is the plastid. The protein localises to the chloroplast thylakoid membrane. The catalysed reaction is a plastoquinone + NADH + (n+1) H(+)(in) = a plastoquinol + NAD(+) + n H(+)(out). It catalyses the reaction a plastoquinone + NADPH + (n+1) H(+)(in) = a plastoquinol + NADP(+) + n H(+)(out). Functionally, NDH shuttles electrons from NAD(P)H:plastoquinone, via FMN and iron-sulfur (Fe-S) centers, to quinones in the photosynthetic chain and possibly in a chloroplast respiratory chain. The immediate electron acceptor for the enzyme in this species is believed to be plastoquinone. Couples the redox reaction to proton translocation, and thus conserves the redox energy in a proton gradient. This Zea mays (Maize) protein is NAD(P)H-quinone oxidoreductase subunit 2 B, chloroplastic.